The following is a 1101-amino-acid chain: Protein diaphanous homolog 2 (1101 aa).

M1 is subject to N-acetylmethionine. The interval M1–L44 is disordered. Residues G10–R22 show a composition bias toward gly residues. Residues S98–D464 form the GBD/FH3 domain. 2 coiled-coil regions span residues K366–D418 and K487–G547. The segment covering R536–S546 has biased composition (polar residues). 3 disordered regions span residues R536–P594, N1010–K1048, and R1070–K1101. Pro residues predominate over residues P549–P594. Residues P549–P623 enclose the FH1 domain. Positions Q628–K1028 constitute an FH2 domain. Residues S903–T1053 adopt a coiled-coil conformation. Basic and acidic residues-rich tracts occupy residues N1010–E1035 and R1078–S1090. Positions D1051–D1081 constitute a DAD domain.

It belongs to the formin homology family. Diaphanous subfamily. In terms of assembly, isoform 3 interacts with RHOD in the GTP-bound form. In terms of tissue distribution, expressed in testis, ovary, small intestine, prostate, lung, liver, kidney and leukocytes.

It localises to the cytoplasm. It is found in the cytosol. The protein localises to the early endosome. Could be involved in oogenesis. Involved in the regulation of endosome dynamics. Implicated in a novel signal transduction pathway, in which isoform 3 and CSK are sequentially activated by RHOD to regulate the motility of early endosomes through interactions with the actin cytoskeleton. The protein is Protein diaphanous homolog 2 (DIAPH2) of Homo sapiens (Human).